The sequence spans 237 residues: MSDVTTAEFNEEGKYLRKVRSFVLREGRLTKGQAQAMEQQWPIMGLDYTPESIDLVEVFGREADTVLEIGFGMGASLVAMAKASPELNFIGIEVHKPGVGACLAEAAEAGVTNLRVYHHDAIEVLENSIAEGSLACVQLFFPDPWHKTRHHKRRIVQAPFAELIRSKLKVGGVFHLATDWENYSEHMLEVMNAAPGYKNQSATGDVVERPDHRPLTKFEARGHRLGHGVWDLMFERV.

S-adenosyl-L-methionine is bound by residues Glu68, Glu93, Asp120, and Asp143. The active site involves Asp143. Substrate-binding positions include Lys147, Asp179, and 216-219 (TKFE).

This sequence belongs to the class I-like SAM-binding methyltransferase superfamily. TrmB family.

It catalyses the reaction guanosine(46) in tRNA + S-adenosyl-L-methionine = N(7)-methylguanosine(46) in tRNA + S-adenosyl-L-homocysteine. It participates in tRNA modification; N(7)-methylguanine-tRNA biosynthesis. Its function is as follows. Catalyzes the formation of N(7)-methylguanine at position 46 (m7G46) in tRNA. This chain is tRNA (guanine-N(7)-)-methyltransferase, found in Shewanella halifaxensis (strain HAW-EB4).